Reading from the N-terminus, the 74-residue chain is Exodeoxyribonuclease 7 small subunit (74 aa).

This sequence belongs to the XseB family. Heterooligomer composed of large and small subunits.

It localises to the cytoplasm. It catalyses the reaction Exonucleolytic cleavage in either 5'- to 3'- or 3'- to 5'-direction to yield nucleoside 5'-phosphates.. Functionally, bidirectionally degrades single-stranded DNA into large acid-insoluble oligonucleotides, which are then degraded further into small acid-soluble oligonucleotides. In Actinobacillus pleuropneumoniae serotype 5b (strain L20), this protein is Exodeoxyribonuclease 7 small subunit.